Reading from the N-terminus, the 59-residue chain is Potassium channel toxin alpha-KTx 1.12 (59 aa).

The N-terminal stretch at 1-22 (MKILSVLLLALIICSIVGWSEA) is a signal peptide. Glutamine 23 is subject to Pyrrolidone carboxylic acid. Intrachain disulfides connect cysteine 29–cysteine 50, cysteine 35–cysteine 55, and cysteine 39–cysteine 57. The interval 48 to 55 (GKCMNKKC) is interaction with Ca(2+)-activated K(+) channels.

It belongs to the short scorpion toxin superfamily. Potassium channel inhibitor family. Alpha-KTx 01 subfamily. As to expression, expressed by the venom gland.

The protein localises to the secreted. In terms of biological role, potent selective inhibitor of high conductance (maxi-K), different medium and small conductance calcium-activated potassium channels (KCa1.1/KCNMA1 and others), as well as a voltage-dependent potassium channel (Kv1.3/KCNA3&gt;Kv1.2/KCNA2&gt;Kv1.6/KCNA3&gt;&gt;Shaker/Sh). It blocks channel activity by a simple bimolecular inhibition process. Its function is as follows. Has a pH-specific antimicrobial activity against bacteria (B.subtilis, E.coli and S.aureus) and the fungus C.albicans. This Leiurus hebraeus (Hebrew deathstalker scorpion) protein is Potassium channel toxin alpha-KTx 1.12.